We begin with the raw amino-acid sequence, 68 residues long: Large ribosomal subunit protein uL29 (68 aa).

The protein belongs to the universal ribosomal protein uL29 family.

This is Large ribosomal subunit protein uL29 (rpl29) from Pyrococcus horikoshii (strain ATCC 700860 / DSM 12428 / JCM 9974 / NBRC 100139 / OT-3).